Reading from the N-terminus, the 438-residue chain is MSETRTVSMPAADAPTVDAPWPVSVLSGKIKGWIDRLGTAWVEGEITQWGGSGGNVYGKLKDLDVDATISFTVWSSVRAKIPADLGQGARVVALVKPNYWVKGGTLTMQVLEMRHVGLGDLLERLERLRQTLRAEGLFDADRKRRLPFLPGCIGLITGKDSDAEKDVLRNAQLHWPSVRFRVVHTAVQGDRAAGEVTRAIGVLDEDPEVDVIVIARGGGDFQNLLVFSDEKLVRTAAACRTPLVSAIGHEADRPLLDDVADLRASTPTDAAKRVVPDVSEELSRVQQARARIGMRLTSQVRGEIDRIEQLRSRPVLASTSWIVDSRAEELGRYIARSAELAGRVVERGMQQTSELSRQLRTLSPQHVLDRGYAIVQTADGSALRAPADAPDGTGLVLRLAAGALGATSTGPTDDIPSSAARLPASPAPDARPASGPES.

A disordered region spans residues 406-438; sequence ATSTGPTDDIPSSAARLPASPAPDARPASGPES.

It belongs to the XseA family. Heterooligomer composed of large and small subunits.

Its subcellular location is the cytoplasm. It catalyses the reaction Exonucleolytic cleavage in either 5'- to 3'- or 3'- to 5'-direction to yield nucleoside 5'-phosphates.. Its function is as follows. Bidirectionally degrades single-stranded DNA into large acid-insoluble oligonucleotides, which are then degraded further into small acid-soluble oligonucleotides. In Clavibacter sepedonicus (Clavibacter michiganensis subsp. sepedonicus), this protein is Exodeoxyribonuclease 7 large subunit.